The following is a 217-amino-acid chain: MSVSSNASSASNKDSVDSPSSTTNTDSSELTHILNRRQEIMESQEAGIEVRRTYKVVNVYTDFPEFSRNQIKDYQKTFNTYDTARDGFLDLQELKFMMEKLGAPQTHLGLKQMIAEVDEDNDGKISFREFLLIFRKAQAGELDSDSGLNQLARLTEVDVEQVGVSGAKNFFEAKIEQQLRTNKFHDEIRAEQEERRREEEERAQRRQQFQQRAAIFQ.

Residues 1 to 28 are compositionally biased toward low complexity; the sequence is MSVSSNASSASNKDSVDSPSSTTNTDSS. The segment at 1-29 is disordered; that stretch reads MSVSSNASSASNKDSVDSPSSTTNTDSSE. EF-hand domains are found at residues 69 to 104 and 105 to 140; these read NQIK…LGAP and QTHL…AQAG. Ca(2+) contacts are provided by Asp82, Asp86, Glu93, Asp118, Asp120, Asp122, Lys124, and Glu129. The segment covering 191–204 has biased composition (basic and acidic residues); that stretch reads EQEERRREEEERAQ. The tract at residues 191–217 is disordered; that stretch reads EQEERRREEEERAQRRQQFQQRAAIFQ. Residues 206 to 217 show a composition bias toward low complexity; it reads RQQFQQRAAIFQ.

The sequence is that of EF-hand domain-containing protein D2 homolog (Swip-1) from Drosophila melanogaster (Fruit fly).